The primary structure comprises 282 residues: Plant cysteine oxidase 3 (282 aa).

Positions 131, 133, and 202 each coordinate Fe cation.

The protein belongs to the cysteine dioxygenase family. It depends on Fe(2+) as a cofactor.

The protein localises to the nucleus. It localises to the cytoplasm. The catalysed reaction is L-cysteine + O2 = 3-sulfino-L-alanine + H(+). Functionally, catalyzes the oxidation of N-terminal cysteine residues (N-Cys), thus preparing the protein for N-end rule pathway-mediated proteasomal degradation, upstream of the N-end rule enzymes ATE1, ATE2 and PRT6. Controls the preparation of the group VII ethylene response factor (ERF-VII) proteins for degradation via the 26S proteasome N-end rule pathway. Acts as an oxygen sensor that controls the stability of ERF-VII proteins, which are stabilized in flooding-induced hypoxia, and regulate transcriptional adaptation to these adverse conditions. The polypeptide is Plant cysteine oxidase 3 (Arabidopsis thaliana (Mouse-ear cress)).